Reading from the N-terminus, the 201-residue chain is Alanine--tRNA ligase (201 aa).

Belongs to the class-II aminoacyl-tRNA synthetase family. Zn(2+) serves as cofactor.

Its subcellular location is the cytoplasm. It carries out the reaction tRNA(Ala) + L-alanine + ATP = L-alanyl-tRNA(Ala) + AMP + diphosphate. Functionally, catalyzes the attachment of alanine to tRNA(Ala) in a two-step reaction: alanine is first activated by ATP to form Ala-AMP and then transferred to the acceptor end of tRNA(Ala). Also edits incorrectly charged Ser-tRNA(Ala) and Gly-tRNA(Ala) via its editing domain. The protein is Alanine--tRNA ligase (alaS) of Rhizobium leguminosarum bv. viciae.